Here is a 474-residue protein sequence, read N- to C-terminus: A-type ATP synthase subunit B (474 aa).

It belongs to the ATPase alpha/beta chains family. In terms of assembly, has multiple subunits with at least A(3), B(3), C, D, E, F, H, I and proteolipid K(x).

The protein resides in the cell membrane. In terms of biological role, component of the A-type ATP synthase that produces ATP from ADP in the presence of a proton gradient across the membrane. The B chain is a regulatory subunit. The protein is A-type ATP synthase subunit B of Halorubrum lacusprofundi (strain ATCC 49239 / DSM 5036 / JCM 8891 / ACAM 34).